We begin with the raw amino-acid sequence, 87 residues long: Small ribosomal subunit protein bS16 (87 aa).

The protein belongs to the bacterial ribosomal protein bS16 family.

The protein is Small ribosomal subunit protein bS16 of Desulfatibacillum aliphaticivorans.